The chain runs to 357 residues: 4-hydroxy-3-methylbut-2-en-1-yl diphosphate synthase (flavodoxin) (357 aa).

4 residues coordinate [4Fe-4S] cluster: C264, C267, C299, and E306.

Belongs to the IspG family. The cofactor is [4Fe-4S] cluster.

It catalyses the reaction (2E)-4-hydroxy-3-methylbut-2-enyl diphosphate + oxidized [flavodoxin] + H2O + 2 H(+) = 2-C-methyl-D-erythritol 2,4-cyclic diphosphate + reduced [flavodoxin]. Its pathway is isoprenoid biosynthesis; isopentenyl diphosphate biosynthesis via DXP pathway; isopentenyl diphosphate from 1-deoxy-D-xylulose 5-phosphate: step 5/6. Functionally, converts 2C-methyl-D-erythritol 2,4-cyclodiphosphate (ME-2,4cPP) into 1-hydroxy-2-methyl-2-(E)-butenyl 4-diphosphate. The chain is 4-hydroxy-3-methylbut-2-en-1-yl diphosphate synthase (flavodoxin) from Campylobacter jejuni subsp. jejuni serotype O:6 (strain 81116 / NCTC 11828).